The following is a 1481-amino-acid chain: Cystic fibrosis transmembrane conductance regulator (1481 aa).

The Cytoplasmic segment spans residues 1–77; that stretch reads MQKSPLEKAG…KLINALRRCF (77 aa). Residues 78 to 98 form a helical membrane-spanning segment; the sequence is FWRFMFYGILLYLGEVTKAVQ. The ABC transmembrane type-1 1 domain occupies 81–365; it reads FMFYGILLYL…WAVQTWYDSL (285 aa). The Extracellular portion of the chain corresponds to 99-122; it reads PLLLGRIIASYDPDNKVERSIAIY. Residues 123–146 traverse the membrane as a helical segment; that stretch reads LGIGLCLLFVVRTLLLHPAIFGLH. Residues 147 to 195 lie on the Cytoplasmic side of the membrane; that stretch reads HIGMQMRIAMFSLIYKKTLKLSSRVLDKISIGQLISLLSNNLNKFDEGL. Residues 196 to 216 form a helical membrane-spanning segment; sequence ALAHFVWISPLQVTLLMGLLW. Topologically, residues 217–222 are extracellular; that stretch reads ELLQAS. A helical membrane pass occupies residues 223-243; it reads AFCGLAFLIVLALVQAGLGRM. The Cytoplasmic portion of the chain corresponds to 244 to 298; it reads MMKYRDQRAGKINERLVITSEMIENIQSVKAYCWEEAMEKMIENLRQTELKLTRK. The chain crosses the membrane as a helical span at residues 299 to 319; sequence AAYVRYFNSSAFFFSGFFVVF. Topologically, residues 320-339 are extracellular; that stretch reads LSVLPYALTKGIILRKIFTT. A helical transmembrane segment spans residues 340 to 358; that stretch reads ISFCIVLRMAVTRQFPWAV. The Cytoplasmic portion of the chain corresponds to 359 to 858; it reads QTWYDSLGAI…YLRYITVHRS (500 aa). ATP is bound by residues Trp401, Ser434, 458-465, and Gln493; that span reads GSTGAGKT. Positions 423–646 constitute an ABC transporter 1 domain; sequence NGDNNLFFSN…RPDFSSKLMG (224 aa). A lipid anchor (S-palmitoyl cysteine) is attached at Cys524. Ser549 and Ser660 each carry phosphoserine. Residues 654 to 831 are disordered R region; sequence SAERRNSILT…EEINEEDLKE (178 aa). Ser670 is subject to Phosphoserine; by PKA. Phosphoserine is present on Ser686. Lys688 participates in a covalent cross-link: Glycyl lysine isopeptide (Lys-Gly) (interchain with G-Cter in ubiquitin). A phosphoserine mark is found at Ser700 and Ser712. Thr717 bears the Phosphothreonine mark. 5 positions are modified to phosphoserine: Ser737, Ser768, Ser790, Ser795, and Ser813. A helical membrane pass occupies residues 859–879; the sequence is LIFVLIWCIVIFLAEVAASLV. An ABC transmembrane type-1 2 domain is found at 859 to 1155; sequence LIFVLIWCIV…AVNSSIDVDS (297 aa). Residues 880–918 lie on the Extracellular side of the membrane; that stretch reads VLWLFGNTAPQDKENSTKSGNSSYAVIITNTSSYYFFYI. N-linked (GlcNAc...) asparagine glycans are attached at residues Asn894, Asn900, and Asn909. The chain crosses the membrane as a discontinuously helical span at residues 919–939; sequence YVGVADTLLALGLFRGLPLVH. Topologically, residues 940–990 are cytoplasmic; the sequence is TLITVSKILHHKMLHSVLQAPMSTLNTLKAGGILNRFSKDIAILDDLLPLT. A helical transmembrane segment spans residues 991-1011; it reads IFDFIQLLLIVVGAIAVVSVL. Topologically, residues 1012-1013 are extracellular; sequence QP. Residues 1014 to 1034 form a helical membrane-spanning segment; it reads YIFLATVPVIAAFILLRAYFL. At 1035-1095 the chain is on the cytoplasmic side; it reads HTSQQLKQLE…TANWFLYLST (61 aa). A helical membrane pass occupies residues 1096–1116; sequence LRWFQMRIEMIFVLFFIAVAF. The Extracellular portion of the chain corresponds to 1117–1130; that stretch reads ISILTTGEGEGRVG. The helical transmembrane segment at 1131-1151 threads the bilayer; it reads IILTLAMNIMSTLQWAVNSSI. At 1152-1481 the chain is on the cytoplasmic side; the sequence is DVDSLMRSVS…AEEEVQGTRL (330 aa). The 246-residue stretch at 1199–1444 folds into the ABC transporter 2 domain; it reads VKKDDVWPSG…KSLFRQAISS (246 aa). Residues Tyr1220 and 1245 to 1252 each bind ATP; that span reads GRTGSGKS. The interval 1387 to 1481 is interaction with GORASP2; that stretch reads RTLKQAFADC…AEEEVQGTRL (95 aa). Cys1396 carries S-palmitoyl cysteine lipidation. Ser1445 and Ser1457 each carry phosphoserine. A disordered region spans residues 1449 to 1481; sequence KLFPHRNSSKHKSRPQITALKEEAEEEVQGTRL. Basic residues predominate over residues 1450–1462; that stretch reads LFPHRNSSKHKSR. Over residues 1471–1481 the composition is skewed to acidic residues; the sequence is EAEEEVQGTRL. Residues 1479-1481 carry the PDZ-binding motif; the sequence is TRL.

It belongs to the ABC transporter superfamily. ABCC family. CFTR transporter (TC 3.A.1.202) subfamily. Monomer; does not require oligomerization for channel activity. May form oligomers in the membrane. Interacts with SLC26A3, SLC26A6 and NHERF1. Interacts with SHANK2. Interacts with MYO6. Interacts (via C-terminus) with GOPC (via PDZ domain); this promotes CFTR internalization and thereby decreases channel activity. Interacts with SLC4A7 through NHERF1. Found in a complex with MYO5B and RAB11A. Interacts with ANO1. Interacts with SLC26A8. Interacts with AHCYL1; the interaction increases CFTR activity. Interacts with CSE1L. The core-glycosylated form interacts with GORASP2 (via PDZ GRASP-type 1 domain) in respone to ER stress. Interacts with MARCHF2; the interaction leads to CFTR ubiqtuitination and degradation. Interacts with ADGRG2. In terms of processing, N-glycosylated. Post-translationally, phosphorylated; cAMP treatment promotes phosphorylation and activates the channel. Dephosphorylation decreases the ATPase activity (in vitro). Phosphorylation at PKA sites activates the channel. Phosphorylation at PKC sites enhances the response to phosphorylation by PKA. Phosphorylated by AMPK; this inhibits channel activity. Ubiquitinated, leading to its degradation in the lysosome. Deubiquitination by USP10 in early endosomes enhances its endocytic recycling to the cell membrane. Ubiquitinated by RNF185 during ER stress. Ubiquitinated by MARCHF2. Isoform 1 is expressed in the pancreas. Isoform 2 is specifically expressed in the ventricle.

The protein localises to the apical cell membrane. The protein resides in the early endosome membrane. It is found in the cell membrane. It localises to the recycling endosome membrane. Its subcellular location is the endoplasmic reticulum membrane. The protein localises to the nucleus. The catalysed reaction is ATP + H2O + closed Cl(-) channel = ADP + phosphate + open Cl(-) channel.. The enzyme catalyses chloride(in) = chloride(out). It catalyses the reaction hydrogencarbonate(in) = hydrogencarbonate(out). It carries out the reaction ATP + H2O = ADP + phosphate + H(+). Its function is as follows. Epithelial ion channel that plays an important role in the regulation of epithelial ion and water transport and fluid homeostasis. Mediates the transport of chloride ions across the cell membrane. Possesses an intrinsic ATPase activity and utilizes ATP to gate its channel; the passive flow of anions through the channel is gated by cycles of ATP binding and hydrolysis by the ATP-binding domains. The ion channel is also permeable to HCO(3)(-); selectivity depends on the extracellular chloride concentration. Exerts its function also by modulating the activity of other ion channels and transporters. Contributes to the regulation of the pH and the ion content of the epithelial fluid layer. Modulates the activity of the epithelial sodium channel (ENaC) complex, in part by regulating the cell surface expression of the ENaC complex. May regulate bicarbonate secretion and salvage in epithelial cells by regulating the transporter SLC4A7. Can inhibit the chloride channel activity of ANO1. Plays a role in the chloride and bicarbonate homeostasis during sperm epididymal maturation and capacitation. The chain is Cystic fibrosis transmembrane conductance regulator from Oryctolagus cuniculus (Rabbit).